The following is a 171-amino-acid chain: Adenine phosphoribosyltransferase (171 aa).

It belongs to the purine/pyrimidine phosphoribosyltransferase family. Homodimer.

It is found in the cytoplasm. The enzyme catalyses AMP + diphosphate = 5-phospho-alpha-D-ribose 1-diphosphate + adenine. Its pathway is purine metabolism; AMP biosynthesis via salvage pathway; AMP from adenine: step 1/1. Functionally, catalyzes a salvage reaction resulting in the formation of AMP, that is energically less costly than de novo synthesis. The sequence is that of Adenine phosphoribosyltransferase from Geotalea uraniireducens (strain Rf4) (Geobacter uraniireducens).